The following is a 216-amino-acid chain: uncharacterized protein (216 aa).

Polar residues predominate over residues 182–193; sequence STSNASVNSDDA. The disordered stretch occupies residues 182 to 204; the sequence is STSNASVNSDDASTAELGPTSEE.

This is an uncharacterized protein from Caenorhabditis elegans.